The sequence spans 695 residues: Elongation factor G (695 aa).

The 275-residue stretch at 8–282 (EKTRNIGIMA…AVLDYLPAPT (275 aa)) folds into the tr-type G domain. Residues 17 to 24 (AHIDAGKT), 81 to 85 (DTPGH), and 135 to 138 (NKMD) each bind GTP.

Belongs to the TRAFAC class translation factor GTPase superfamily. Classic translation factor GTPase family. EF-G/EF-2 subfamily.

The protein localises to the cytoplasm. Its function is as follows. Catalyzes the GTP-dependent ribosomal translocation step during translation elongation. During this step, the ribosome changes from the pre-translocational (PRE) to the post-translocational (POST) state as the newly formed A-site-bound peptidyl-tRNA and P-site-bound deacylated tRNA move to the P and E sites, respectively. Catalyzes the coordinated movement of the two tRNA molecules, the mRNA and conformational changes in the ribosome. The sequence is that of Elongation factor G from Listeria innocua serovar 6a (strain ATCC BAA-680 / CLIP 11262).